The chain runs to 758 residues: Maturase-like protein 2 (758 aa).

It localises to the plastid. The protein localises to the chloroplast. This chain is Maturase-like protein 2 (mat2), found in Euglena gracilis.